Reading from the N-terminus, the 65-residue chain is Large ribosomal subunit protein bL35 (65 aa).

The segment covering 1-16 has biased composition (basic residues); that stretch reads MVPKQKTHSGAKKRFK. A disordered region spans residues 1-39; sequence MVPKQKTHSGAKKRFKLTGSGSVSRARAGMRHNFEHRSS.

It belongs to the bacterial ribosomal protein bL35 family.

The chain is Large ribosomal subunit protein bL35 from Tropheryma whipplei (strain TW08/27) (Whipple's bacillus).